Reading from the N-terminus, the 779-residue chain is Acyl-homoserine lactone acylase PvdQ (779 aa).

Residues 1-25 (MIISRPLCSFVFAGLSFAVILPAQA) form the signal peptide. Residues 202-223 (AQQAQALQLAAARNQRFALERG) constitute a propeptide, spacer peptide. Serine 224 (nucleophile) is an active-site residue. Over residues 731–746 (ESSNPQSAHSSDQTEA) the composition is skewed to polar residues. Residues 731-750 (ESSNPQSAHSSDQTEAFSKK) are disordered.

It belongs to the peptidase S45 family. In terms of assembly, heterodimer of an alpha subunit and a beta subunit processed from the same precursor.

The protein resides in the periplasm. It carries out the reaction an N-acyl-L-homoserine lactone + H2O = L-homoserine lactone + a carboxylate. In terms of biological role, catalyzes the deacylation of acyl-homoserine lactone (AHL or acyl-HSL), releasing homoserine lactone (HSL) and the corresponding fatty acid. Possesses a specificity for the degradation of long-chain acyl-HSLs (side chains of 11 to 14 carbons in length). The chain is Acyl-homoserine lactone acylase PvdQ (pvdQ) from Pseudomonas syringae pv. syringae (strain B728a).